A 78-amino-acid polypeptide reads, in one-letter code: Toxin BmTxKS4 (78 aa).

A signal peptide spans 1–21 (MKLKISFLILVLFSVFFAIEG). Residues 22–32 (IIKWFPASVNG) constitute a propeptide that is removed on maturation.

Post-translationally, contains 3 disulfide bonds. In terms of tissue distribution, expressed by the venom gland.

It localises to the secreted. In terms of biological role, reversibly inhibits potassium channels. In Olivierus martensii (Manchurian scorpion), this protein is Toxin BmTxKS4.